The chain runs to 326 residues: Pantothenate kinase (326 aa).

Glycine 104–serine 111 serves as a coordination point for ATP.

Belongs to the prokaryotic pantothenate kinase family.

Its subcellular location is the cytoplasm. It catalyses the reaction (R)-pantothenate + ATP = (R)-4'-phosphopantothenate + ADP + H(+). It functions in the pathway cofactor biosynthesis; coenzyme A biosynthesis; CoA from (R)-pantothenate: step 1/5. This Parvibaculum lavamentivorans (strain DS-1 / DSM 13023 / NCIMB 13966) protein is Pantothenate kinase.